A 375-amino-acid chain; its full sequence is Fasciculation and elongation protein zeta-2 (375 aa).

Positions M1 to S42 are disordered. Phosphoserine is present on residues S130, S171, and S190. Residues T156–D177 adopt a coiled-coil conformation. Residues E206–G281 adopt a coiled-coil conformation. The tract at residues Q265 to R297 is disordered.

Belongs to the zygin family. In terms of assembly, homodimer; disulfide-linked. May form heterodimers with FEZ1. Interacts with synaptotagmin.

Functionally, involved in axonal outgrowth and fasciculation. The protein is Fasciculation and elongation protein zeta-2 (Fez2) of Rattus norvegicus (Rat).